The following is a 236-amino-acid chain: Glucosamine-6-phosphate deaminase (236 aa).

D62 (proton acceptor; for enolization step) is an active-site residue. The active-site For ring-opening step is N128. The active-site Proton acceptor; for ring-opening step is H130. The active-site For ring-opening step is E135.

It belongs to the glucosamine/galactosamine-6-phosphate isomerase family. NagB subfamily.

It catalyses the reaction alpha-D-glucosamine 6-phosphate + H2O = beta-D-fructose 6-phosphate + NH4(+). Its pathway is amino-sugar metabolism; N-acetylneuraminate degradation; D-fructose 6-phosphate from N-acetylneuraminate: step 5/5. Functionally, catalyzes the reversible isomerization-deamination of glucosamine 6-phosphate (GlcN6P) to form fructose 6-phosphate (Fru6P) and ammonium ion. The polypeptide is Glucosamine-6-phosphate deaminase (Oenococcus oeni (strain ATCC BAA-331 / PSU-1)).